The primary structure comprises 223 residues: RNA-free ribonuclease P (223 aa).

This sequence belongs to the HARP family.

The catalysed reaction is Endonucleolytic cleavage of RNA, removing 5'-extranucleotides from tRNA precursor.. Its function is as follows. RNA-free RNase P that catalyzes the removal of the 5'-leader sequence from pre-tRNA to produce the mature 5'-terminus. The chain is RNA-free ribonuclease P from Methanococcus maripaludis (strain C6 / ATCC BAA-1332).